Reading from the N-terminus, the 549-residue chain is MLNQKIQNPNPDELMIEVDLCYELDPYELKLDEMIEAEPEPEMIEGLPASDALTPADRYLELFEHVQSAKIFPDSKTFPDCAPKMDPLDILIRYRKVRRHRDFDLRKFVENHFWLPEVYSSEYVSDPQNSLKEHIDQLWPVLTREPQDHIPWSSLLALPQSYIVPGGRFSETYYWDSYFTMLGLAESGREDLLKCMADNFAWMIENYGHIPNGNRTYYLSRSQPPVFALMVELFEEDGVRGARRYLDHLKMEYAFWMDGAESLIPNQAYRHVVRMPDGSLLNRYWDDRDTPRDESWLEDVETAKHSGRPPNEVYRDLRAGAASGWDYSSRWLRDTGRLASIRTTQFIPIDLNAFLFKLESAIANISALKGEKETEALFRQKASARRDAVNRYLWDDENGIYRDYDWRREQLALFSAAAIVPLYVGMANHEQADRLANAVRSRLLTPGGILASEYETGEQWDKPNGWAPLQWMAIQGFKMYGDDLLGDEIARSWLKTVNQFYLEQHKMIEKYHIADGVPREGGGGEYPLQDGFGWTNGVVRRLIGLYGEP.

Substrate contacts are provided by residues arginine 168, tryptophan 175 to aspartate 176, asparagine 212, arginine 221 to glutamine 223, arginine 292 to glutamate 294, and glycine 324. Catalysis depends on proton donor/acceptor residues aspartate 326 and glutamate 509. Position 525 (glutamate 525) interacts with substrate.

It belongs to the glycosyl hydrolase 37 family. In terms of assembly, monomer.

The protein localises to the cytoplasm. It carries out the reaction alpha,alpha-trehalose + H2O = alpha-D-glucose + beta-D-glucose. It functions in the pathway glycan degradation; trehalose degradation; D-glucose from alpha,alpha-trehalose: step 1/1. Its function is as follows. Hydrolyzes trehalose to glucose. Could be involved, in cells returning to low osmolarity conditions, in the utilization of the accumulated cytoplasmic trehalose, which was synthesized in response to high osmolarity. This chain is Cytoplasmic trehalase, found in Escherichia coli O139:H28 (strain E24377A / ETEC).